Here is a 145-residue protein sequence, read N- to C-terminus: Ribosome maturation factor RimP (145 aa).

The protein belongs to the RimP family.

It localises to the cytoplasm. In terms of biological role, required for maturation of 30S ribosomal subunits. This is Ribosome maturation factor RimP from Azotobacter vinelandii (strain DJ / ATCC BAA-1303).